The sequence spans 162 residues: N5-carboxyaminoimidazole ribonucleotide mutase (162 aa).

3 residues coordinate substrate: serine 11, aspartate 14, and arginine 41.

Belongs to the AIR carboxylase family. Class I subfamily.

It catalyses the reaction 5-carboxyamino-1-(5-phospho-D-ribosyl)imidazole + H(+) = 5-amino-1-(5-phospho-D-ribosyl)imidazole-4-carboxylate. It participates in purine metabolism; IMP biosynthesis via de novo pathway; 5-amino-1-(5-phospho-D-ribosyl)imidazole-4-carboxylate from 5-amino-1-(5-phospho-D-ribosyl)imidazole (N5-CAIR route): step 2/2. Functionally, catalyzes the conversion of N5-carboxyaminoimidazole ribonucleotide (N5-CAIR) to 4-carboxy-5-aminoimidazole ribonucleotide (CAIR). This chain is N5-carboxyaminoimidazole ribonucleotide mutase, found in Brucella melitensis biotype 1 (strain ATCC 23456 / CCUG 17765 / NCTC 10094 / 16M).